A 612-amino-acid chain; its full sequence is Glutamine--fructose-6-phosphate aminotransferase [isomerizing] (612 aa).

Residue cysteine 2 is the Nucleophile; for GATase activity of the active site. Positions cysteine 2–serine 221 constitute a Glutamine amidotransferase type-2 domain. SIS domains are found at residues phenylalanine 289–isoleucine 429 and leucine 461–proline 602. Lysine 607 acts as the For Fru-6P isomerization activity in catalysis.

In terms of assembly, homodimer.

It is found in the cytoplasm. The catalysed reaction is D-fructose 6-phosphate + L-glutamine = D-glucosamine 6-phosphate + L-glutamate. Functionally, catalyzes the first step in hexosamine metabolism, converting fructose-6P into glucosamine-6P using glutamine as a nitrogen source. This is Glutamine--fructose-6-phosphate aminotransferase [isomerizing] from Wigglesworthia glossinidia brevipalpis.